Reading from the N-terminus, the 224-residue chain is Biotin transport ATP-binding protein BioM (224 aa).

An ABC transporter domain is found at 3 to 224; it reads IQFESAGVSF…AIARYREIAA (222 aa). 34 to 41 is a binding site for ATP; it reads GLNGSGKT.

This sequence belongs to the ABC transporter superfamily. As to quaternary structure, part of a biotin transporter complex composed of BioM, BioN and BioY.

The protein resides in the cell inner membrane. In terms of biological role, involved in biotin uptake. In Rhizobium etli (strain ATCC 51251 / DSM 11541 / JCM 21823 / NBRC 15573 / CFN 42), this protein is Biotin transport ATP-binding protein BioM (bioM).